We begin with the raw amino-acid sequence, 491 residues long: Chromosomal replication initiator protein DnaA (491 aa).

Residues 1–86 are domain I, interacts with DnaA modulators; the sequence is MTDELNSQFT…VEALSRRLGE (86 aa). The domain II stretch occupies residues 86-150; the sequence is ENVELGVRIA…GADKAETPDT (65 aa). A domain III, AAA+ region region spans residues 151–367; the sequence is SLNARYTFES…GALIRVTAFA (217 aa). ATP-binding residues include Gly195, Gly197, Lys198, and Thr199. The segment at 368–491 is domain IV, binds dsDNA; that stretch reads SLNKSPIELS…TARIRQRSRH (124 aa).

The protein belongs to the DnaA family. Oligomerizes as a right-handed, spiral filament on DNA at oriC.

Its subcellular location is the cytoplasm. Its function is as follows. Plays an essential role in the initiation and regulation of chromosomal replication. ATP-DnaA binds to the origin of replication (oriC) to initiate formation of the DNA replication initiation complex once per cell cycle. Binds the DnaA box (a 9 base pair repeat at the origin) and separates the double-stranded (ds)DNA. Forms a right-handed helical filament on oriC DNA; dsDNA binds to the exterior of the filament while single-stranded (ss)DNA is stabiized in the filament's interior. The ATP-DnaA-oriC complex binds and stabilizes one strand of the AT-rich DNA unwinding element (DUE), permitting loading of DNA polymerase. After initiation quickly degrades to an ADP-DnaA complex that is not apt for DNA replication. Binds acidic phospholipids. This Mycobacteroides abscessus (strain ATCC 19977 / DSM 44196 / CCUG 20993 / CIP 104536 / JCM 13569 / NCTC 13031 / TMC 1543 / L948) (Mycobacterium abscessus) protein is Chromosomal replication initiator protein DnaA.